The primary structure comprises 409 residues: Nucleoprotein (409 aa).

Disordered stretches follow at residues 1 to 31 (MASG…GSSG), 44 to 84 (LNSP…KGGR), 164 to 196 (RSGR…EDDL), and 238 to 258 (VDQV…DDKM). The span at 15–31 (PVIKLGGPKPPKVGSSG) shows a compositional bias: low complexity. Positions 29–160 (SSGNVSWFQA…GNFRWDFIPL (132 aa)) are RNA-binding. The CoV N NTD domain maps to 31-156 (GNVSWFQAIK…GGPDGNFRWD (126 aa)). The segment covering 70 to 84 (YWRRQARFKPGKGGR) has biased composition (basic residues). A compositionally biased stretch (low complexity) spans 166–179 (GRSTAASSAASSRA). 2 stretches are compositionally biased toward basic and acidic residues: residues 180-192 (PSRE…RSGS) and 247-258 (KGKEGNFGDDKM). 2 positions are modified to phosphoserine; by host: S190 and S192. In terms of domain architecture, CoV N CTD spans 215–331 (TKAKADEMAH…QCVDGVGTRP (117 aa)). The dimerization stretch occupies residues 226–333 (RYCKRTIPPN…VDGVGTRPKD (108 aa)). Cysteines 320 and 323 form a disulfide. A disordered region spans residues 326 to 409 (GVGTRPKDDE…GDSALGENEL (84 aa)). A compositionally biased stretch (basic residues) spans 358–367 (QRPKKEKKPK). Residues 368 to 384 (KQDDEVDKALTSDEERN) are compositionally biased toward basic and acidic residues. At T378 the chain carries Phosphothreonine; by host. Residue S379 is modified to Phosphoserine; by host.

Belongs to the gammacoronavirus nucleocapsid protein family. As to quaternary structure, homooligomer. Both monomeric and oligomeric forms interact with RNA. Interacts with protein M. Interacts with NSP3; this interaction serves to tether the genome to the newly translated replicase-transcriptase complex at a very early stage of infection. In terms of processing, ADP-ribosylated. The ADP-ribosylation is retained in the virion during infection. Phosphorylated on serine and threonine residues.

It localises to the virion. The protein resides in the host endoplasmic reticulum-Golgi intermediate compartment. Its subcellular location is the host Golgi apparatus. Its function is as follows. Packages the positive strand viral genome RNA into a helical ribonucleocapsid (RNP) and plays a fundamental role during virion assembly through its interactions with the viral genome and membrane protein M. Plays an important role in enhancing the efficiency of subgenomic viral RNA transcription as well as viral replication. In Gallus gallus (Chicken), this protein is Nucleoprotein.